A 567-amino-acid chain; its full sequence is Geranylgeranyl transferase type-2 subunit alpha (567 aa).

PFTA repeat units lie at residues 44 to 78, 88 to 122, 124 to 158, 159 to 193, 207 to 241, and 363 to 397; these read LDES…QLET, LVKA…RLPE, NWAR…QAAV, APAE…QLHP, VLLR…RAEP, and VLQS…ALDP. S98 carries the phosphoserine modification. LRR repeat units follow at residues 442-463, 464-486, 487-508, 509-530, and 534-555; these read DVRV…EQLL, LVTH…AALR, CLEV…ANLP, RLRE…QTLA, and RLVF…RERL.

It belongs to the protein prenyltransferase subunit alpha family. As to quaternary structure, heterotrimer composed of RABGGTA, RABGGTB and CHM; within this trimer, RABGGTA and RABGGTB form the catalytic component B, while CHM (component A) mediates peptide substrate binding. The Rab GGTase dimer (RGGT) interacts with CHM (component A) prior to Rab protein binding; the association is stabilized by geranylgeranyl pyrophosphate (GGpp). The CHM:RGGT:Rab complex is destabilized by GGpp. Interacts with non-phosphorylated form of RAB8A; phosphorylation of RAB8A at 'Thr-72' disrupts this interaction.

It carries out the reaction geranylgeranyl diphosphate + L-cysteinyl-[protein] = S-geranylgeranyl-L-cysteinyl-[protein] + diphosphate. The enzymatic reaction requires the aid of a Rab escort protein (also called component A), such as CHM. Its function is as follows. Catalyzes the transfer of a geranylgeranyl moiety from geranylgeranyl diphosphate to both cysteines of Rab proteins with the C-terminal sequence -XXCC, -XCXC and -CCXX, such as RAB1A, RAB3A, RAB5A and RAB7A. The polypeptide is Geranylgeranyl transferase type-2 subunit alpha (Rabggta) (Mus musculus (Mouse)).